The following is a 178-amino-acid chain: MNATPEKADDLIVVGKIFSVHGVRGEVKVYSFTDPIENLLDYPRWTLRHEGKVKQVELVSGRGSQKGLVVKLKGLEDRDEARLLSGYEICIARSLLPNLAADEYYWYQLVGLKVINQDEHLFGKVDHLLETGANDVMVVKPCAGSLDDRERLLPYTAQCVLAIDLEAGVMRVEWDADF.

In terms of domain architecture, PRC barrel spans 101–178 (ADEYYWYQLV…VMRVEWDADF (78 aa)).

Belongs to the RimM family. In terms of assembly, binds ribosomal protein uS19.

The protein localises to the cytoplasm. Functionally, an accessory protein needed during the final step in the assembly of 30S ribosomal subunit, possibly for assembly of the head region. Essential for efficient processing of 16S rRNA. May be needed both before and after RbfA during the maturation of 16S rRNA. It has affinity for free ribosomal 30S subunits but not for 70S ribosomes. In Pseudomonas putida (strain GB-1), this protein is Ribosome maturation factor RimM.